The chain runs to 241 residues: MNPMGRKWANIVAKKTAKDGANSKIYAKFGVEIYVAAKQGEPDPESNSALKFVLERAKQAQVPKHVIDKAIDKAKGNTDETFVEGRYEGFGPNGSMIIVDTLTSNVNRTAANVRTAFGKNGGNMGASGSVSYMFDKKGVIVFAGEDADAIFEQLLEADVDVEDVEAEDGTITVYTEPTDLHKALEALRANGQEEFQVTELEMIPQTEVTLEGEDLETFKGLIDALEADDDVQKVYHNVADM.

The protein belongs to the TACO1 family. YeeN subfamily.

Its subcellular location is the cytoplasm. This Streptococcus thermophilus (strain ATCC BAA-250 / LMG 18311) protein is Probable transcriptional regulatory protein stu0195.